The chain runs to 181 residues: Bifunctional protein PyrR (181 aa).

The PRPP-binding signature appears at 101–113; the sequence is VIVVDDVLYTGRT.

The protein belongs to the purine/pyrimidine phosphoribosyltransferase family. PyrR subfamily. In terms of assembly, homodimer and homohexamer; in equilibrium.

It carries out the reaction UMP + diphosphate = 5-phospho-alpha-D-ribose 1-diphosphate + uracil. In terms of biological role, regulates transcriptional attenuation of the pyrimidine nucleotide (pyr) operon by binding in a uridine-dependent manner to specific sites on pyr mRNA. This disrupts an antiterminator hairpin in the RNA and favors formation of a downstream transcription terminator, leading to a reduced expression of downstream genes. Its function is as follows. Also displays a weak uracil phosphoribosyltransferase activity which is not physiologically significant. The sequence is that of Bifunctional protein PyrR from Bacillus velezensis (strain DSM 23117 / BGSC 10A6 / LMG 26770 / FZB42) (Bacillus amyloliquefaciens subsp. plantarum).